We begin with the raw amino-acid sequence, 490 residues long: Probable alcohol acetyltransferase FCK4 (490 aa).

The protein belongs to the alcohol acetyltransferase FCK4 family.

The protein operates within secondary metabolite biosynthesis. In terms of biological role, probable alcohol acetyltransferase; part of the gene cluster that mediates the biosynthesis of cytokinins such as fusatin, fusatinic acids or 8-oxofusatin, known for their growth promoting and anti-senescence activities toward host plants. FCK1 is a bifunctional enzyme that performs the first steps in the biosynthesis of Fusarium cytokinins. It first condenses adenosine monophosphate (AMP) with dimethylallyl diphosphate (DMAPP) to yield isoprenyl adenosine monophosphate. It then catalyzes the removal of the phosphoribose to produce isopentenylaldehyde. The cytochrome P450 monooxygenase then converts isopentenylaldehyde to trans-zeatin. A condensation step converts trans-zeatin to fusatin which is further modified to produce fusatinic acid. The mechanism for oxidation of fusatin to fusatinic acid remains unknown. 8-oxofusatin could be produced through several pathways, via direct oxygenation of fusatin, or via the 8-oxo-pentenyladenine intermediate which itself must arise from either the prenylation of 8-oxo-AMP by FCK1 and/or oxygenation of isopentenylaldehyde. Both the FCK3 and FCK4 enzymes act downstream of the identified cytokinins to produce yet unidentified compounds. The protein is Probable alcohol acetyltransferase FCK4 of Fusarium pseudograminearum (strain CS3096) (Wheat and barley crown-rot fungus).